Here is a 330-residue protein sequence, read N- to C-terminus: HTH-type transcriptional regulator GanR (330 aa).

Positions 2–57 (ATIKDIAQEAGFSISTVSRVLNNDESLSVPDETREKIYEAAEKLNYRKKTVRPLVK) constitute an HTH lacI-type domain. The H-T-H motif DNA-binding region spans 4 to 23 (IKDIAQEAGFSISTVSRVLN).

In terms of biological role, negatively regulates the expression of the ganSPQAB operon. Inhibits transcription of the operon by binding to an operator in the promoter region. In the presence of galactobiose, GanR dissociates from the promoter, resulting in the expression of the gan operon. This Bacillus subtilis (strain 168) protein is HTH-type transcriptional regulator GanR.